A 648-amino-acid chain; its full sequence is EF-hand domain-containing protein 1 (648 aa).

The segment at 1–45 (MGTNPVHGLPFLPGSSFTDSTKTAFHRSQTLNYRNGYAVVRRPTM) is required for its localization in the mitotic spindle and interaction with alpha-tubulin. DM10 domains are found at residues 93 to 198 (DKKV…ESQG), 239 to 359 (DKQV…KDKF), and 416 to 520 (DNKV…ESNA). The EF-hand domain occupies 582-617 (SYKENLRETFQMYDKDESGYVDRETFFKICETLNVP).

Microtubule inner protein component of sperm flagellar doublet microtubules. Interacts with the C-terminus of CACNA1E. Interacts with alpha-tubulin. Expressed in adult brain including hippocampus, cerebellum, cerebral cortex, thalamus, hypothalamus, amygdala and upper brainstem. Expressed in soma and dentrites of pyramidal neurons of the hippocampal CA1 region, pyramidal neurons of the cerebral cortex and Purkinje cells of cerebellum. Highly expressed in testis, trachea, and oviduct, moderately in lung, and slightly in brain. Highly expressed in sperm flagella and tracheal cilia (at protein level).

The protein localises to the cytoplasm. Its subcellular location is the cytoskeleton. It localises to the cilium axoneme. It is found in the flagellum axoneme. The protein resides in the microtubule organizing center. The protein localises to the centrosome. Its subcellular location is the spindle. It localises to the spindle pole. Its function is as follows. Microtubule inner protein (MIP) part of the dynein-decorated doublet microtubules (DMTs) in cilia axoneme, which is required for motile cilia beating. Microtubule-associated protein which regulates cell division and neuronal migration during cortical development. Necessary for radial and tangential cell migration during brain development, possibly acting as a regulator of cell morphology and process formation during migration. May enhance calcium influx through CACNA1E and stimulate programmed cell death. Overexpression of EFHC1 in hippocampal primary culture neurons induced apoptosis. The polypeptide is EF-hand domain-containing protein 1 (Efhc1) (Mus musculus (Mouse)).